The primary structure comprises 456 residues: Solute carrier family 49 member 4 homolog (456 aa).

Over 1-29 (MGLEWSSPGERQPLLYPGGPRAPRVFGRR) the chain is Cytoplasmic. Positions 14–15 (LL) match the Di-leucine motif; mediates lysosomal localization motif. Residues 30-50 (WLVLLLFSLLAFLQGLVWNSW) traverse the membrane as a helical segment. The Lumenal portion of the chain corresponds to 51-67 (GPIQNSARTAYNFSGLD). The N-linked (GlcNAc...) asparagine glycan is linked to Asn62. A helical transmembrane segment spans residues 68–88 (IALLVLWGPIGFLPCFLFMWL). Residues 89–95 (MDNRGLR) lie on the Cytoplasmic side of the membrane. Residues 96-116 (VTVLLTALLMVLGAGLRCVPV) form a helical membrane-spanning segment. At 117 to 131 (QDLAVRRKLIHGGQL) the chain is on the lumenal side. The helical transmembrane segment at 132–152 (LNGFAGPTVMNAAPFLSTTWF) threads the bilayer. Residues 153-162 (SPDERATATA) are Cytoplasmic-facing. Residues 163–183 (IASMLSYLGGACAFLVGPLVV) traverse the membrane as a helical segment. The Lumenal portion of the chain corresponds to 184–207 (PAPNSTSGLLLYSGSVGAIRDRIE). The N-linked (GlcNAc...) asparagine glycan is linked to Asn187. The chain crosses the membrane as a helical span at residues 208 to 228 (AVMYAEFGIIFVVFAAILAYF). At 229 to 259 (PSRPPVPPSVAAASRRLSYRTSILRLLSNVR) the chain is on the cytoplasmic side. Residues 260–280 (FLLIVLAYAIPLGFYAGWSGV) traverse the membrane as a helical segment. The Lumenal segment spans residues 281 to 292 (LDLILTPVHVTQ). A helical transmembrane segment spans residues 293–313 (VDAGWVGFWSIVGGCVVGIAV). At 314 to 326 (GRFADSIRGVLKP) the chain is on the cytoplasmic side. Residues 327–347 (ILLLLFSGAALSSTWFTLTFL) form a helical membrane-spanning segment. Residues 348-362 (SNVTHLPLTTATLYT) are Lumenal-facing. The N-linked (GlcNAc...) asparagine glycan is linked to Asn349. The chain crosses the membrane as a helical span at residues 363-383 (SCILIGVFLSGTVPIFFEMFV). At 384 to 392 (ETVYPIPEG) the chain is on the cytoplasmic side. The helical transmembrane segment at 393–413 (ITCGVVTFLSNLFMGVLLLFL) threads the bilayer. Over 414 to 420 (TLYQTNL) the chain is Lumenal. Asn419 carries N-linked (GlcNAc...) asparagine glycosylation. A helical transmembrane segment spans residues 421–441 (SWLNWCLTGSCFLSLLFIACF). Residues 442–456 (RESYDRLYLDVFVSV) are Cytoplasmic-facing.

The protein belongs to the major facilitator superfamily.

The protein localises to the lysosome membrane. It catalyses the reaction pyridoxine(out) + n H(+)(out) = pyridoxine(in) + n H(+)(in). Functionally, mediates H(+)-dependent pyridoxine transport. The sequence is that of Solute carrier family 49 member 4 homolog (slc49a4) from Xenopus tropicalis (Western clawed frog).